We begin with the raw amino-acid sequence, 374 residues long: Pectate lyase 3 (374 aa).

Residues 1 to 22 (MKYLLPSAAAGLLLLAAQPTMA) form the signal peptide. Cys93 and Cys176 are oxidised to a cystine. Ca(2+) contacts are provided by Asp150, Asp152, Glu187, and Asp191. Residue Arg239 is part of the active site. Cys350 and Cys373 are disulfide-bonded.

The protein belongs to the polysaccharide lyase 1 family. PLADES subfamily. Ca(2+) is required as a cofactor.

The protein resides in the secreted. It carries out the reaction Eliminative cleavage of (1-&gt;4)-alpha-D-galacturonan to give oligosaccharides with 4-deoxy-alpha-D-galact-4-enuronosyl groups at their non-reducing ends.. Its pathway is glycan metabolism; pectin degradation; 2-dehydro-3-deoxy-D-gluconate from pectin: step 2/5. Its function is as follows. Involved in maceration and soft-rotting of plant tissue. The polypeptide is Pectate lyase 3 (pel3) (Pectobacterium carotovorum (Erwinia carotovora)).